Consider the following 394-residue polypeptide: Magnesium transporter MRS2-2 (394 aa).

Residues 115 to 145 (PVGNASHNGGQGDGKEIAGAQNDGDTGDEDE) are disordered. 2 consecutive transmembrane segments (helical) span residues 329-349 (LVLS…GIFG) and 366-386 (YVVG…MSYA). The Required for magnesium transport activity signature appears at 349–351 (GMN).

This sequence belongs to the CorA metal ion transporter (MIT) (TC 1.A.35.5) family. In terms of tissue distribution, expressed in the whole plant but preferentially in the mature anthers.

The protein resides in the membrane. Its function is as follows. Low-affinity magnesium transporter that mediates the influx of magnesium. Plays a crucial role in male gametophyte development and male fertility. The chain is Magnesium transporter MRS2-2 (MRS2-2) from Arabidopsis thaliana (Mouse-ear cress).